Reading from the N-terminus, the 754-residue chain is 5-methyltetrahydropteroyltriglutamate--homocysteine methyltransferase (754 aa).

5-methyltetrahydropteroyltri-L-glutamate-binding positions include 15-18 (RELK) and K114. L-homocysteine-binding positions include 430-432 (IGS) and E483. L-methionine is bound by residues 430 to 432 (IGS) and E483. 5-methyltetrahydropteroyltri-L-glutamate contacts are provided by residues 514 to 515 (RC) and W560. Position 598 (D598) interacts with L-homocysteine. L-methionine is bound at residue D598. Residue E604 participates in 5-methyltetrahydropteroyltri-L-glutamate binding. Positions 641, 643, and 665 each coordinate Zn(2+). H694 acts as the Proton donor in catalysis. C726 contributes to the Zn(2+) binding site.

The protein belongs to the vitamin-B12 independent methionine synthase family. Zn(2+) serves as cofactor.

It catalyses the reaction 5-methyltetrahydropteroyltri-L-glutamate + L-homocysteine = tetrahydropteroyltri-L-glutamate + L-methionine. Its pathway is amino-acid biosynthesis; L-methionine biosynthesis via de novo pathway; L-methionine from L-homocysteine (MetE route): step 1/1. Catalyzes the transfer of a methyl group from 5-methyltetrahydrofolate to homocysteine resulting in methionine formation. This is 5-methyltetrahydropteroyltriglutamate--homocysteine methyltransferase from Campylobacter jejuni (strain RM1221).